The chain runs to 845 residues: MHIIKRNGEPQPYMREKIIVAISAAFRSVQNPLAPEVPAIITDLAAEVERQLFEMNRAGVPVHVEKIQDFVEKTLTKYNHSDEVKSFILYRDDRTKKRIAREQIACCFTDSSVLGVLKEIQQDFPFPEYSLDALASKFLLFKKEVTDERRSMQLLIKAAVELTAQEAPQWELIAARLLMLDFSLALGTSLEKLNIHSFYEKITYLEEAGLYGVYIRTHYSRAEIEEAATYLECSRDKLFTYSSLDMILRRYVIRTRAHVPLETPQEMFLGIALHLAMNETQDRMQWVKRFYTVLSKLQVTVATPTLSNARKPFHQLSSCFVDTVPDSLDGIYRSIDNFSQVSKFGGGMGLYFGKVRAVGAPIRGFQGAAGGILRWIKLANDTAVAVDQLGVRQGSVAVYLDVWHKDIPEFLQLRTNNGDDRMKAHDVFPAVCYPDLFWKTVRDNLGASWYLMCPHEILTVKGYALEDFYAEEWEKRYWDCVKDARISKRTIPIKELVRLVLKSVVETGTPFAFYRDHANRANPNGHRGIIYCSNLCTEIAQNMSAINLVSVKITEVDGQKVVVQTTRPGDFVVCNLASLVLSNIDLSDDKELREVVRVAVRALDNVIDLTYYPVPYAQVTNAYYRAIGLGVSGYHHVLAQQGIDWESDEHLAFADRIFERINRAAIEASMTIAREKGAYGCFTGSDWCTGAYFRKRGYVSEDWQRLQREVATHGMRNGYLLAVAPTSSTSIIAGTTAGVDPIMKQYFLEEKKGMLMPRVAPSLSQKTCPLYKSAHAVEQRWSIRAAGLRQRHIDQAQSVNLYITTDFTLKQVLDLYVYAWEVGMKSLYYVRSQSLEIDLCGYCAS.

Residues 1–98 enclose the ATP-cone domain; it reads MHIIKRNGEP…LYRDDRTKKR (98 aa). Substrate-binding positions include threonine 303, 318 to 319, glycine 347, 534 to 538, and 725 to 729; these read SC, NLCTE, and PTSST. Residues cysteine 319 and cysteine 574 are joined by a disulfide bond. Asparagine 534 (proton acceptor) is an active-site residue. Catalysis depends on cysteine 536, which acts as the Cysteine radical intermediate. Glutamate 538 (proton acceptor) is an active-site residue.

Belongs to the ribonucleoside diphosphate reductase large chain family. Tetramer of two alpha and two beta subunits.

The enzyme catalyses a 2'-deoxyribonucleoside 5'-diphosphate + [thioredoxin]-disulfide + H2O = a ribonucleoside 5'-diphosphate + [thioredoxin]-dithiol. Its activity is regulated as follows. Under complex allosteric control mediated by deoxynucleoside triphosphates and ATP binding. The type of nucleotide bound at the specificity site determines substrate preference. It seems probable that ATP makes the enzyme reduce CDP and UDP, dGTP favors ADP reduction and dTTP favors GDP reduction. Its function is as follows. Provides the precursors necessary for DNA synthesis. Catalyzes the biosynthesis of deoxyribonucleotides from the corresponding ribonucleotides. In Treponema pallidum (strain Nichols), this protein is Ribonucleoside-diphosphate reductase subunit alpha (nrdA).